The primary structure comprises 123 residues: Large ribosomal subunit protein bL20 (123 aa).

The protein belongs to the bacterial ribosomal protein bL20 family.

In terms of biological role, binds directly to 23S ribosomal RNA and is necessary for the in vitro assembly process of the 50S ribosomal subunit. It is not involved in the protein synthesizing functions of that subunit. The polypeptide is Large ribosomal subunit protein bL20 (Ehrlichia ruminantium (strain Gardel)).